Reading from the N-terminus, the 150-residue chain is MSDVITPGEIDIVGILDLLPHRYPFVMVDRILSIDPGKEIVGLKNVTFNEQYFQGHFPGEPVMPGVLMLEGLAQVGCVHAFYTEPDAVGKKLAFFAGVDKARFRKPVRPGDQLIYKVQLVKEKRSIIFMSAKGYVDDQVVVQAELMASFS.

Residue His-56 is part of the active site.

Belongs to the thioester dehydratase family. FabZ subfamily.

The protein localises to the cytoplasm. The enzyme catalyses a (3R)-hydroxyacyl-[ACP] = a (2E)-enoyl-[ACP] + H2O. Its function is as follows. Involved in unsaturated fatty acids biosynthesis. Catalyzes the dehydration of short chain beta-hydroxyacyl-ACPs and long chain saturated and unsaturated beta-hydroxyacyl-ACPs. The sequence is that of 3-hydroxyacyl-[acyl-carrier-protein] dehydratase FabZ from Desulfotalea psychrophila (strain LSv54 / DSM 12343).